Here is a 263-residue protein sequence, read N- to C-terminus: Putative TATA-binding protein pB263R (263 aa).

Belongs to the asfivirus B263R family.

Its function is as follows. Putative TATA-binding protein. The chain is Putative TATA-binding protein pB263R from African swine fever virus (isolate Tick/Malawi/Lil 20-1/1983) (ASFV).